Reading from the N-terminus, the 329-residue chain is Ferredoxin--NADP reductase 2 (329 aa).

FAD is bound by residues threonine 18, glutamate 37, glutamine 45, tyrosine 50, valine 90, phenylalanine 124, aspartate 285, and serine 326.

This sequence belongs to the ferredoxin--NADP reductase type 2 family. As to quaternary structure, homodimer. It depends on FAD as a cofactor.

The enzyme catalyses 2 reduced [2Fe-2S]-[ferredoxin] + NADP(+) + H(+) = 2 oxidized [2Fe-2S]-[ferredoxin] + NADPH. The polypeptide is Ferredoxin--NADP reductase 2 (Bacillus mycoides (strain KBAB4) (Bacillus weihenstephanensis)).